A 377-amino-acid chain; its full sequence is N5-carboxyaminoimidazole ribonucleotide synthase (377 aa).

Residues R93, K133, 138 to 144, 175 to 178, E183, H206, and 257 to 258 contribute to the ATP site; these read GYDGKGQ, EEFV, and NE. The 191-residue stretch at 97–287 folds into the ATP-grasp domain; it reads KALLDRAQVA…QFENHLRAVC (191 aa).

This sequence belongs to the PurK/PurT family. In terms of assembly, homodimer.

It catalyses the reaction 5-amino-1-(5-phospho-beta-D-ribosyl)imidazole + hydrogencarbonate + ATP = 5-carboxyamino-1-(5-phospho-D-ribosyl)imidazole + ADP + phosphate + 2 H(+). It participates in purine metabolism; IMP biosynthesis via de novo pathway; 5-amino-1-(5-phospho-D-ribosyl)imidazole-4-carboxylate from 5-amino-1-(5-phospho-D-ribosyl)imidazole (N5-CAIR route): step 1/2. Catalyzes the ATP-dependent conversion of 5-aminoimidazole ribonucleotide (AIR) and HCO(3)(-) to N5-carboxyaminoimidazole ribonucleotide (N5-CAIR). This is N5-carboxyaminoimidazole ribonucleotide synthase from Vibrio cholerae serotype O1 (strain ATCC 39315 / El Tor Inaba N16961).